Here is a 638-residue protein sequence, read N- to C-terminus: 1-deoxy-D-xylulose-5-phosphate synthase (638 aa).

Thiamine diphosphate is bound by residues histidine 71 and 112 to 114; that span reads SHA. Residue aspartate 144 coordinates Mg(2+). Residues 145-146, asparagine 173, tyrosine 284, and glutamate 365 contribute to the thiamine diphosphate site; that span reads GA. Asparagine 173 is a binding site for Mg(2+).

Belongs to the transketolase family. DXPS subfamily. As to quaternary structure, homodimer. It depends on Mg(2+) as a cofactor. Thiamine diphosphate serves as cofactor.

It catalyses the reaction D-glyceraldehyde 3-phosphate + pyruvate + H(+) = 1-deoxy-D-xylulose 5-phosphate + CO2. The protein operates within metabolic intermediate biosynthesis; 1-deoxy-D-xylulose 5-phosphate biosynthesis; 1-deoxy-D-xylulose 5-phosphate from D-glyceraldehyde 3-phosphate and pyruvate: step 1/1. In terms of biological role, catalyzes the acyloin condensation reaction between C atoms 2 and 3 of pyruvate and glyceraldehyde 3-phosphate to yield 1-deoxy-D-xylulose-5-phosphate (DXP). The polypeptide is 1-deoxy-D-xylulose-5-phosphate synthase (Mycobacterium sp. (strain KMS)).